The following is a 366-amino-acid chain: Spermine synthase (366 aa).

N-acetylalanine is present on Ala2. Ser57 carries the post-translational modification Phosphoserine. The PABS domain maps to 122–362; sequence RYWPTADGRL…ELWVFYTVWK (241 aa). Residue Gln148 participates in S-adenosyl 3-(methylsulfanyl)propylamine binding. Spermidine is bound by residues Tyr177 and Asp201. S-adenosyl 3-(methylsulfanyl)propylamine contacts are provided by residues Glu220 and 255–256; that span reads DC. Catalysis depends on Asp276, which acts as the Proton acceptor. Spermidine-binding residues include Tyr351 and Glu353.

Belongs to the spermidine/spermine synthase family. In terms of assembly, homodimer. Dimerization is mediated through the N-terminal domain and seems to be required for activity as deletion of the N-terminal domain causes complete loss of activity.

It catalyses the reaction S-adenosyl 3-(methylsulfanyl)propylamine + spermidine = spermine + S-methyl-5'-thioadenosine + H(+). It participates in amine and polyamine biosynthesis; spermine biosynthesis; spermine from spermidine: step 1/1. Catalyzes the production of spermine from spermidine and decarboxylated S-adenosylmethionine (dcSAM). Required for normal viability, growth and fertility. This is Spermine synthase (Sms) from Mus musculus (Mouse).